The following is a 1490-amino-acid chain: Leucine-rich repeat-containing protein 7 (1490 aa).

LRR repeat units lie at residues 23–44, 47–68, 70–91, 93–114, 116–137, 139–161, 162–183, 185–206, 208–229, 231–253, 254–275, 277–298, 300–321, 323–344, 346–367, 369–391, and 392–413; these read IISV…VFNF, TLEE…LFNC, ALRK…IASL, NLKE…IKCC, CLTI…FTQL, NLTQ…GRLV, KLRI…MHKL, QLER…LDQI, NLRE…IGKL, MLVY…SGCE, ALED…IGLL, KLTT…IGNL, LLEE…IGYL, SLRT…IGSC, NVTV…IGQM, RLRV…TKLK, and ELAA…QTEA. Residues serine 439, serine 441, and serine 443 each carry the phosphoserine modification. A compositionally biased stretch (basic and acidic residues) spans 663–676; it reads KKESTDESEVDKTH. Disordered stretches follow at residues 663-704, 785-807, and 822-899; these read KKES…NTRM, AGEN…AHGR, and ELEQ…YHDP. Over residues 677–686 the composition is skewed to polar residues; that stretch reads CLNNSVSSGT. Over residues 687–700 the composition is skewed to low complexity; that stretch reads YSDYSPSQASSASS. Residue threonine 831 is modified to Phosphothreonine. A Phosphoserine modification is found at serine 850. Positions 859–871 are enriched in low complexity; it reads PSKLETTPTTSPL. The residue at position 865 (threonine 865) is a Phosphothreonine. At serine 869 the chain carries Phosphoserine. Positions 872–882 are enriched in basic and acidic residues; that stretch reads PERKDHMKEPT. Serine 947, serine 949, and serine 1118 each carry phosphoserine. Basic and acidic residues predominate over residues 1134–1144; sequence PHELPPGDRYG. 2 disordered regions span residues 1134–1158 and 1196–1218; these read PHEL…QSSI and QRRP…TRPV. At arginine 1149 the chain carries Omega-N-methylarginine. The span at 1196 to 1217 shows a compositional bias: polar residues; it reads QRRPLSARSYSTESYGASQTRP. Phosphoserine is present on serine 1233. 2 disordered regions span residues 1238–1265 and 1282–1312; these read GNYG…SCGK and RLDR…PYPL. Over residues 1243–1263 the composition is skewed to basic and acidic residues; that stretch reads KTSDNSDIKTRPTPVKGEESC. Over residues 1286-1307 the composition is skewed to polar residues; that stretch reads TPSQQSNILDNGQEDVSPSGQW. Serine 1288 and serine 1392 each carry phosphoserine. The 91-residue stretch at 1398 to 1488 folds into the PDZ domain; that stretch reads EQFCVRIEKN…TVDLVIQREL (91 aa).

It belongs to the LAP (LRR and PDZ) protein family. Interacts with CNKSR2 and DLG4. Interacts with CTNND2/Catenin delta-2. Forms a complex with N-cadherin through CTNND2. Interacts with CAMK2A. As to expression, expressed in brain (at protein level).

The protein resides in the cytoplasm. The protein localises to the postsynaptic density. Functionally, required for normal synaptic spine architecture and function. Necessary for DISC1 and GRM5 localization to postsynaptic density complexes and for both N-methyl D-aspartate receptor-dependent and metabotropic glutamate receptor-dependent long term depression. In Mus musculus (Mouse), this protein is Leucine-rich repeat-containing protein 7 (Lrrc7).